The chain runs to 185 residues: Crossover junction endodeoxyribonuclease RuvC (185 aa).

Catalysis depends on residues D7, E66, and D137. Mg(2+) contacts are provided by D7, E66, and D137.

This sequence belongs to the RuvC family. In terms of assembly, homodimer which binds Holliday junction (HJ) DNA. The HJ becomes 2-fold symmetrical on binding to RuvC with unstacked arms; it has a different conformation from HJ DNA in complex with RuvA. In the full resolvosome a probable DNA-RuvA(4)-RuvB(12)-RuvC(2) complex forms which resolves the HJ. It depends on Mg(2+) as a cofactor.

Its subcellular location is the cytoplasm. The catalysed reaction is Endonucleolytic cleavage at a junction such as a reciprocal single-stranded crossover between two homologous DNA duplexes (Holliday junction).. Functionally, the RuvA-RuvB-RuvC complex processes Holliday junction (HJ) DNA during genetic recombination and DNA repair. Endonuclease that resolves HJ intermediates. Cleaves cruciform DNA by making single-stranded nicks across the HJ at symmetrical positions within the homologous arms, yielding a 5'-phosphate and a 3'-hydroxyl group; requires a central core of homology in the junction. The consensus cleavage sequence is 5'-(A/T)TT(C/G)-3'. Cleavage occurs on the 3'-side of the TT dinucleotide at the point of strand exchange. HJ branch migration catalyzed by RuvA-RuvB allows RuvC to scan DNA until it finds its consensus sequence, where it cleaves and resolves the cruciform DNA. This chain is Crossover junction endodeoxyribonuclease RuvC, found in Anaeromyxobacter dehalogenans (strain 2CP-1 / ATCC BAA-258).